Reading from the N-terminus, the 195-residue chain is CASP-like protein IN26 (195 aa).

The Cytoplasmic portion of the chain corresponds to 1 to 26 (VAPTGSVETEKAGPSYKPKEYYKVTE). A helical transmembrane segment spans residues 27–47 (AILRLLLLASLVVAVVVMVTS). Residues 48-75 (KETELISVKLDPFPPFMLPLTAKFTQSP) lie on the Extracellular side of the membrane. A helical membrane pass occupies residues 76–96 (AFIYFVAGLSVAGLYTIISTL). Residues 97-120 (ASFYNLLIKPGFCPALVSHFIILD) lie on the Cytoplasmic side of the membrane. The helical transmembrane segment at 121–143 (VVMLGIVGTATGAAGGVAYIGLK) threads the bilayer. The Extracellular portion of the chain corresponds to 144 to 163 (GNSHVGWTKVCNKYGKLCTH). A helical membrane pass occupies residues 164 to 184 (LGASLAVSFFAFIVLLLLIIL). Topologically, residues 185 to 195 (SIHSLSKKIPK) are cytoplasmic.

The protein belongs to the Casparian strip membrane proteins (CASP) family. Homodimer and heterodimers.

It localises to the cell membrane. This chain is CASP-like protein IN26 (IN26), found in Ipomoea nil (Japanese morning glory).